Consider the following 313-residue polypeptide: Flagellin (313 aa).

Coiled coils occupy residues 5–33 (INTNDSALLAQNNLTKSKGILGSAIERLS) and 97–117 (VQSENGSNSKSDLDSIQKEVT). Repeat copies occupy residues 179-197 (KEAVAAKPAVPAQPAVPAD), 199-217 (KNGVAAKPAVPAQPEVKAQ), 255-259 (VNNLN), and 262-266 (VNNLS). Residues 179–217 (KEAVAAKPAVPAQPAVPADPKNGVAAKPAVPAQPEVKAQ) are 2 X 19 AA approximate tandem repeats. Over residues 190–199 (AQPAVPADPK) the composition is skewed to low complexity. Positions 190–211 (AQPAVPADPKNGVAAKPAVPAQ) are disordered. The stretch at 252–298 (ESTVNNLNNTVNNLSAARSRIEDADYAVEVSNMSRGQILQQAGTSVL) forms a coiled coil. The 2 X 5 AA approximate repeats of V-N-N-L-N stretch occupies residues 255–266 (VNNLNNTVNNLS).

This sequence belongs to the bacterial flagellin family.

The protein resides in the secreted. Its subcellular location is the bacterial flagellum. Functionally, flagellin is the subunit protein which polymerizes to form the filaments of bacterial flagella. The sequence is that of Flagellin (fliC) from Xenorhabdus nematophila (Achromobacter nematophilus).